A 909-amino-acid chain; its full sequence is Cutinase transcription factor 1 alpha (909 aa).

A disordered region spans residues 1–51; that stretch reads MSSGDAPPQAQPQPHQQEQPNQRQSSTPAPSAAPVPPAPSTSTSNSAGGVS. Residues 12 to 30 are compositionally biased toward low complexity; sequence PQPHQQEQPNQRQSSTPAP. Positions 61-90 form a DNA-binding region, zn(2)-C6 fungal-type; it reads CETCHARKVRCDAASLGVPCTNCVAFQIEC. Disordered stretches follow at residues 95–159, 651–757, and 841–878; these read PKRK…EAQA, AEGK…SFSV, and LPQG…QGQA. The span at 110 to 119 shows a compositional bias: basic and acidic residues; the sequence is KDSDSDRGDG. Residues 142 to 156 show a composition bias toward polar residues; it reads VFHSHNGTPPTTLTE. The segment covering 669–683 has biased composition (basic and acidic residues); sequence QHSRQQEAPKRKYDE. 3 stretches are compositionally biased toward polar residues: residues 704–717, 737–755, and 865–878; these read PQTP…TSSM, GGTN…NPSF, and SPDS…QGQA.

The protein resides in the nucleus. This chain is Cutinase transcription factor 1 alpha (CTF1-ALPHA), found in Fusarium vanettenii (Neocosmospora pisi).